The following is a 408-amino-acid chain: LL-diaminopimelate aminotransferase (408 aa).

Positions 15 and 42 each coordinate substrate. Pyridoxal 5'-phosphate is bound by residues Tyr72, 108–109 (SK), Tyr132, Asn187, Tyr218, and 246–248 (SFS). Substrate contacts are provided by Lys109, Tyr132, and Asn187. The residue at position 249 (Lys249) is an N6-(pyridoxal phosphate)lysine. The pyridoxal 5'-phosphate site is built by Arg257 and Asn292. Residues Asn292 and Arg388 each contribute to the substrate site.

The protein belongs to the class-I pyridoxal-phosphate-dependent aminotransferase family. LL-diaminopimelate aminotransferase subfamily. As to quaternary structure, homodimer. It depends on pyridoxal 5'-phosphate as a cofactor.

It carries out the reaction (2S,6S)-2,6-diaminopimelate + 2-oxoglutarate = (S)-2,3,4,5-tetrahydrodipicolinate + L-glutamate + H2O + H(+). Its pathway is amino-acid biosynthesis; L-lysine biosynthesis via DAP pathway; LL-2,6-diaminopimelate from (S)-tetrahydrodipicolinate (aminotransferase route): step 1/1. Involved in the synthesis of meso-diaminopimelate (m-DAP or DL-DAP), required for both lysine and peptidoglycan biosynthesis. Catalyzes the direct conversion of tetrahydrodipicolinate to LL-diaminopimelate. In Prochlorococcus marinus (strain AS9601), this protein is LL-diaminopimelate aminotransferase.